The primary structure comprises 73 residues: uncharacterized protein (73 aa).

Residues Ala37 to Ala57 form a helical membrane-spanning segment.

Its subcellular location is the membrane. This is an uncharacterized protein from Natronomonas pharaonis (strain ATCC 35678 / DSM 2160 / CIP 103997 / JCM 8858 / NBRC 14720 / NCIMB 2260 / Gabara) (Halobacterium pharaonis).